The chain runs to 452 residues: Sesamin methylene transferase (452 aa).

This sequence belongs to the GcvT family. Homotrimer.

The catalysed reaction is (+)-sesamin + (6S)-5,6,7,8-tetrahydrofolyl-(gamma-L-Glu)(n) = (+)-sesamin monocatechol + (6R)-5,10-methylenetetrahydrofolyl-(gamma-L-Glu)(n). It carries out the reaction (+)-sesamin monocatechol + (6S)-5,6,7,8-tetrahydrofolyl-(gamma-L-Glu)(n) = (+)-sesamin dicatechol + (6R)-5,10-methylenetetrahydrofolyl-(gamma-L-Glu)(n). Converts sesamin into sesamin mono- and di-catechol. Catalyzes a ring cleavage to transfer the methylene group to tetrahydrofolate (THF). Also active with (+)-episesamin, (-)-asarinin, sesaminol, (+)-sesamolin and piperine. In Sinomonas sp. (strain No.22), this protein is Sesamin methylene transferase.